The sequence spans 155 residues: Small ribosomal subunit protein uS7 (155 aa).

It belongs to the universal ribosomal protein uS7 family. Part of the 30S ribosomal subunit. Contacts proteins S9 and S11.

In terms of biological role, one of the primary rRNA binding proteins, it binds directly to 16S rRNA where it nucleates assembly of the head domain of the 30S subunit. Is located at the subunit interface close to the decoding center, probably blocks exit of the E-site tRNA. In Xanthomonas axonopodis pv. citri (strain 306), this protein is Small ribosomal subunit protein uS7.